We begin with the raw amino-acid sequence, 112 residues long: Nucleoid-associated protein FTH_1374 (112 aa).

Residues 1–27 form a disordered region; that stretch reads MNFDMSKLMQQAQKMQEQMKKAQQERE. Residues 17–27 show a composition bias toward basic and acidic residues; that stretch reads EQMKKAQQERE.

It belongs to the YbaB/EbfC family. As to quaternary structure, homodimer.

The protein resides in the cytoplasm. It localises to the nucleoid. Binds to DNA and alters its conformation. May be involved in regulation of gene expression, nucleoid organization and DNA protection. This chain is Nucleoid-associated protein FTH_1374, found in Francisella tularensis subsp. holarctica (strain OSU18).